The chain runs to 238 residues: LexA repressor (238 aa).

The H-T-H motif DNA-binding region spans 26-46 (FDEMKDALDLASKSGIHRLIT). Residues Ser158 and Lys196 each act as for autocatalytic cleavage activity in the active site.

This sequence belongs to the peptidase S24 family. As to quaternary structure, homodimer.

The catalysed reaction is Hydrolysis of Ala-|-Gly bond in repressor LexA.. In terms of biological role, represses a number of genes involved in the response to DNA damage (SOS response), including recA and lexA. In the presence of single-stranded DNA, RecA interacts with LexA causing an autocatalytic cleavage which disrupts the DNA-binding part of LexA, leading to derepression of the SOS regulon and eventually DNA repair. This Sinorhizobium medicae (strain WSM419) (Ensifer medicae) protein is LexA repressor.